The primary structure comprises 37 residues: Large ribosomal subunit protein bL36c (37 aa).

Belongs to the bacterial ribosomal protein bL36 family.

It is found in the plastid. The protein localises to the chloroplast. The chain is Large ribosomal subunit protein bL36c from Dioscorea elephantipes (Elephant's foot yam).